The sequence spans 235 residues: Putative cobalt transport protein CbiM 2 (235 aa).

The next 7 membrane-spanning stretches (helical) occupy residues 8 to 28 (LPAIWCIVWFVVSIPVVAYGV), 40 to 60 (GILPVLAVAGAFIFVLSSLKM), 74 to 94 (GIGAIIFGPAITAVLSTIVLI), 107 to 127 (TLGANVFSMGIVGPIVAYLIY), 135 to 155 (LNFYLIVFLAATLGDWATYIV), 160 to 180 (LALAFPAGDILTFGGFFSSFS), and 185 to 205 (IFAITQVPLAIVEGAVSALLF).

The protein belongs to the CbiM family. In terms of assembly, forms an energy-coupling factor (ECF) transporter complex composed of an ATP-binding protein (A component, CbiO), a transmembrane protein (T component, CbiQ) and 2 possible substrate-capture proteins (S components, CbiM and CbiN) of unknown stoichimetry.

It is found in the cell membrane. It functions in the pathway cofactor biosynthesis; adenosylcobalamin biosynthesis. Functionally, part of the energy-coupling factor (ECF) transporter complex CbiMNOQ involved in cobalt import. The chain is Putative cobalt transport protein CbiM 2 from Methanosarcina barkeri (strain Fusaro / DSM 804).